We begin with the raw amino-acid sequence, 208 residues long: Thymidylate kinase (208 aa).

10-17 (GPEGSGKT) provides a ligand contact to ATP.

This sequence belongs to the thymidylate kinase family.

It carries out the reaction dTMP + ATP = dTDP + ADP. Phosphorylation of dTMP to form dTDP in both de novo and salvage pathways of dTTP synthesis. This chain is Thymidylate kinase, found in Bacillus cereus (strain B4264).